Consider the following 137-residue polypeptide: Cofilin (137 aa).

The region spanning 5-135 (GVKVSPECLE…AYETVLEKVT (131 aa)) is the ADF-H domain.

Belongs to the actin-binding proteins ADF family.

The protein localises to the cytoplasm. Its subcellular location is the cytoskeleton. It localises to the nucleus matrix. In terms of biological role, controls reversibly actin polymerization and depolymerization in a pH-sensitive manner. It has the ability to bind G- and F-actin in a 1:1 ratio of cofilin to actin. Binding to F-actin is regulated by tropomyosin. It is the major component of intranuclear and cytoplasmic actin rods. Required for accumulation of actin at the cell division site via depolymerizing actin at the cell ends. In association with myosin II has a role in the assembly of the contractile ring via severing actin filaments. Involved in the maintenance of the contractile ring once formed. In association with profilin and capping protein, has a role in the mitotic reorganization of the actin cytoskeleton. Severs actin filaments (F-actin). The chain is Cofilin (cof1) from Schizosaccharomyces pombe (strain 972 / ATCC 24843) (Fission yeast).